Here is a 433-residue protein sequence, read N- to C-terminus: Serine hydroxymethyltransferase (433 aa).

(6S)-5,6,7,8-tetrahydrofolate contacts are provided by residues Leu-132 and 136–138 (GHL). Lys-241 is subject to N6-(pyridoxal phosphate)lysine.

The protein belongs to the SHMT family. Homodimer. The cofactor is pyridoxal 5'-phosphate.

The protein localises to the cytoplasm. The enzyme catalyses (6R)-5,10-methylene-5,6,7,8-tetrahydrofolate + glycine + H2O = (6S)-5,6,7,8-tetrahydrofolate + L-serine. It participates in one-carbon metabolism; tetrahydrofolate interconversion. Its pathway is amino-acid biosynthesis; glycine biosynthesis; glycine from L-serine: step 1/1. Functionally, catalyzes the reversible interconversion of serine and glycine with tetrahydrofolate (THF) serving as the one-carbon carrier. This reaction serves as the major source of one-carbon groups required for the biosynthesis of purines, thymidylate, methionine, and other important biomolecules. Also exhibits THF-independent aldolase activity toward beta-hydroxyamino acids, producing glycine and aldehydes, via a retro-aldol mechanism. The chain is Serine hydroxymethyltransferase from Rhodopseudomonas palustris (strain HaA2).